We begin with the raw amino-acid sequence, 366 residues long: GTP cyclohydrolase 1 type 2 homolog (366 aa).

5 residues coordinate Zn(2+): H64, H65, D102, H326, and E329.

It belongs to the GTP cyclohydrolase I type 2/NIF3 family. As to quaternary structure, homohexamer.

The chain is GTP cyclohydrolase 1 type 2 homolog from Staphylococcus aureus (strain MRSA252).